The following is a 432-amino-acid chain: Serine--tRNA ligase (432 aa).

230–232 (TAE) contacts L-serine. 261–263 (RSE) is an ATP binding site. An L-serine-binding site is contributed by E284. Residue 348-351 (EVSS) participates in ATP binding. An L-serine-binding site is contributed by S383.

This sequence belongs to the class-II aminoacyl-tRNA synthetase family. Type-1 seryl-tRNA synthetase subfamily. In terms of assembly, homodimer. The tRNA molecule binds across the dimer.

The protein resides in the cytoplasm. The catalysed reaction is tRNA(Ser) + L-serine + ATP = L-seryl-tRNA(Ser) + AMP + diphosphate + H(+). It carries out the reaction tRNA(Sec) + L-serine + ATP = L-seryl-tRNA(Sec) + AMP + diphosphate + H(+). The protein operates within aminoacyl-tRNA biosynthesis; selenocysteinyl-tRNA(Sec) biosynthesis; L-seryl-tRNA(Sec) from L-serine and tRNA(Sec): step 1/1. In terms of biological role, catalyzes the attachment of serine to tRNA(Ser). Is also able to aminoacylate tRNA(Sec) with serine, to form the misacylated tRNA L-seryl-tRNA(Sec), which will be further converted into selenocysteinyl-tRNA(Sec). This is Serine--tRNA ligase from Limosilactobacillus fermentum (strain NBRC 3956 / LMG 18251) (Lactobacillus fermentum).